The chain runs to 412 residues: Multidrug resistance protein MdtA (412 aa).

An N-terminal signal peptide occupies residues 1–21 (MKGSNIRRWGAALAVVIIAGA). Disordered stretches follow at residues 33 to 53 (GSGA…RHGR) and 389 to 412 (VVTA…GARS).

The protein belongs to the membrane fusion protein (MFP) (TC 8.A.1) family. As to quaternary structure, part of a tripartite efflux system composed of MdtA, MdtB and MdtC.

Its subcellular location is the cell inner membrane. The polypeptide is Multidrug resistance protein MdtA (Klebsiella pneumoniae subsp. pneumoniae (strain ATCC 700721 / MGH 78578)).